The primary structure comprises 186 residues: Orotate phosphoribosyltransferase (186 aa).

Residues arginine 96, lysine 100, histidine 102, and 121–129 each bind 5-phospho-alpha-D-ribose 1-diphosphate; that span reads DDVATTGTS. Residues threonine 125 and arginine 153 each coordinate orotate.

It belongs to the purine/pyrimidine phosphoribosyltransferase family. PyrE subfamily. In terms of assembly, homodimer. Requires Mg(2+) as cofactor.

The enzyme catalyses orotidine 5'-phosphate + diphosphate = orotate + 5-phospho-alpha-D-ribose 1-diphosphate. It functions in the pathway pyrimidine metabolism; UMP biosynthesis via de novo pathway; UMP from orotate: step 1/2. Catalyzes the transfer of a ribosyl phosphate group from 5-phosphoribose 1-diphosphate to orotate, leading to the formation of orotidine monophosphate (OMP). This chain is Orotate phosphoribosyltransferase, found in Aeropyrum pernix (strain ATCC 700893 / DSM 11879 / JCM 9820 / NBRC 100138 / K1).